The following is a 255-amino-acid chain: Electron transfer flavoprotein beta subunit lysine methyltransferase (255 aa).

A mitochondrion-targeting transit peptide spans 1 to 32 (MAFSLCWKAPRSPWSFLQAVNNGSPLFLWRTV).

The protein belongs to the methyltransferase superfamily. ETFBKMT family. In terms of assembly, interacts with HSPD1; this protein may possibly be a methylation substrate.

The protein localises to the cytoplasm. The protein resides in the mitochondrion matrix. It carries out the reaction L-lysyl-[protein] + 3 S-adenosyl-L-methionine = N(6),N(6),N(6)-trimethyl-L-lysyl-[protein] + 3 S-adenosyl-L-homocysteine + 3 H(+). Its function is as follows. Protein-lysine methyltransferase that selectively trimethylates the flavoprotein ETFB in mitochondria. Thereby, may negatively regulate the function of ETFB in electron transfer from Acyl-CoA dehydrogenases. The protein is Electron transfer flavoprotein beta subunit lysine methyltransferase of Mus musculus (Mouse).